Consider the following 346-residue polypeptide: Cytochrome c551 peroxidase (346 aa).

The first 23 residues, 1–23 (MQSSQLLPLGSLLLSFATPLAQA), serve as a signal peptide directing secretion. Heme c contacts are provided by cysteine 74, cysteine 77, histidine 78, cysteine 220, cysteine 223, histidine 224, histidine 284, and methionine 298.

Requires heme c as cofactor. In terms of processing, binds 2 heme groups per subunit. Sequencing of the whole protein indicates about 20% starts on Val-247.

The protein resides in the periplasm. The catalysed reaction is 2 Fe(II)-[cytochrome c] + H2O2 + 2 H(+) = 2 Fe(III)-[cytochrome c] + 2 H2O. Functionally, catalyzes the peroxidative oxidation of azurin and cytochrome c551. Likely to provide protection against toxic peroxides. This is Cytochrome c551 peroxidase (ccpA) from Pseudomonas aeruginosa (strain ATCC 15692 / DSM 22644 / CIP 104116 / JCM 14847 / LMG 12228 / 1C / PRS 101 / PAO1).